The following is a 622-amino-acid chain: Chaperone protein HscA homolog (622 aa).

Belongs to the heat shock protein 70 family.

Chaperone involved in the maturation of iron-sulfur cluster-containing proteins. Has a low intrinsic ATPase activity which is markedly stimulated by HscB. The polypeptide is Chaperone protein HscA homolog (Burkholderia pseudomallei (strain K96243)).